Here is a 174-residue protein sequence, read N- to C-terminus: Ribosome maturation factor RimM (174 aa).

The 74-residue stretch at 99–172 folds into the PRC barrel domain; it reads ADEFFYHDVI…RLVIRPIAGL (74 aa).

The protein belongs to the RimM family. As to quaternary structure, binds ribosomal protein uS19.

The protein resides in the cytoplasm. An accessory protein needed during the final step in the assembly of 30S ribosomal subunit, possibly for assembly of the head region. Essential for efficient processing of 16S rRNA. May be needed both before and after RbfA during the maturation of 16S rRNA. It has affinity for free ribosomal 30S subunits but not for 70S ribosomes. The sequence is that of Ribosome maturation factor RimM from Chloroflexus aurantiacus (strain ATCC 29366 / DSM 635 / J-10-fl).